The primary structure comprises 304 residues: Ribonuclease BN (304 aa).

7 residues coordinate Zn(2+): H63, H65, D67, H68, H140, D211, and H269. D67 serves as the catalytic Proton acceptor.

This sequence belongs to the RNase Z family. RNase BN subfamily. In terms of assembly, homodimer. It depends on Zn(2+) as a cofactor.

Zinc phosphodiesterase, which has both exoribonuclease and endoribonuclease activities. This is Ribonuclease BN from Erwinia tasmaniensis (strain DSM 17950 / CFBP 7177 / CIP 109463 / NCPPB 4357 / Et1/99).